The following is a 276-amino-acid chain: Expansin-A25 (276 aa).

The N-terminal stretch at M1–G27 is a signal peptide. The Expansin-like EG45 domain occupies Q73–G183. The Expansin-like CBD domain occupies Y193 to G272.

Belongs to the expansin family. Expansin A subfamily.

Its subcellular location is the secreted. The protein localises to the cell wall. It is found in the membrane. Functionally, causes loosening and extension of plant cell walls by disrupting non-covalent bonding between cellulose microfibrils and matrix glucans. No enzymatic activity has been found. This is Expansin-A25 (EXPA25) from Arabidopsis thaliana (Mouse-ear cress).